The chain runs to 412 residues: Argininosuccinate synthase (412 aa).

ATP-binding positions include 15 to 23 and Ala42; that span reads AYSGGLDTS. L-citrulline-binding residues include Tyr93 and Ser98. Gly123 serves as a coordination point for ATP. L-aspartate is bound by residues Thr125, Asn129, and Asp130. Asn129 contributes to the L-citrulline binding site. Residues Arg133, Ser185, Ser194, Glu270, and Tyr282 each coordinate L-citrulline.

The protein belongs to the argininosuccinate synthase family. Type 1 subfamily. As to quaternary structure, homotetramer.

The protein localises to the cytoplasm. It carries out the reaction L-citrulline + L-aspartate + ATP = 2-(N(omega)-L-arginino)succinate + AMP + diphosphate + H(+). Its pathway is amino-acid biosynthesis; L-arginine biosynthesis; L-arginine from L-ornithine and carbamoyl phosphate: step 2/3. The protein is Argininosuccinate synthase of Psychrobacter cryohalolentis (strain ATCC BAA-1226 / DSM 17306 / VKM B-2378 / K5).